A 579-amino-acid polypeptide reads, in one-letter code: Isocitrate dehydrogenase kinase/phosphatase (579 aa).

Residues 324–330 and Lys-345 each bind ATP; that span reads ADGTPGM. The active site involves Asp-380.

It belongs to the AceK family.

The protein resides in the cytoplasm. It carries out the reaction L-seryl-[isocitrate dehydrogenase] + ATP = O-phospho-L-seryl-[isocitrate dehydrogenase] + ADP + H(+). Functionally, bifunctional enzyme which can phosphorylate or dephosphorylate isocitrate dehydrogenase (IDH) on a specific serine residue. This is a regulatory mechanism which enables bacteria to bypass the Krebs cycle via the glyoxylate shunt in response to the source of carbon. When bacteria are grown on glucose, IDH is fully active and unphosphorylated, but when grown on acetate or ethanol, the activity of IDH declines drastically concomitant with its phosphorylation. This Xanthomonas axonopodis pv. citri (strain 306) protein is Isocitrate dehydrogenase kinase/phosphatase.